The chain runs to 610 residues: UvrABC system protein C (610 aa).

Positions 16-94 (SQPGVYRMYD…IKLYQPRYNV (79 aa)) constitute a GIY-YIG domain. The UVR domain occupies 204 to 239 (DQVLTQLISRMETASQNLEFEEAARIRDQIQAVRRV).

It belongs to the UvrC family. As to quaternary structure, interacts with UvrB in an incision complex.

It localises to the cytoplasm. Its function is as follows. The UvrABC repair system catalyzes the recognition and processing of DNA lesions. UvrC both incises the 5' and 3' sides of the lesion. The N-terminal half is responsible for the 3' incision and the C-terminal half is responsible for the 5' incision. This is UvrABC system protein C from Shigella boydii serotype 18 (strain CDC 3083-94 / BS512).